A 314-amino-acid chain; its full sequence is UDP-N-acetylenolpyruvoylglucosamine reductase (314 aa).

In terms of domain architecture, FAD-binding PCMH-type spans 31–208 (RIGGPADYYA…LSARFRLTPK (178 aa)). Arginine 187 is a catalytic residue. Residue serine 237 is the Proton donor of the active site. The active site involves glutamate 307.

The protein belongs to the MurB family. It depends on FAD as a cofactor.

It is found in the cytoplasm. It catalyses the reaction UDP-N-acetyl-alpha-D-muramate + NADP(+) = UDP-N-acetyl-3-O-(1-carboxyvinyl)-alpha-D-glucosamine + NADPH + H(+). It functions in the pathway cell wall biogenesis; peptidoglycan biosynthesis. Its function is as follows. Cell wall formation. This is UDP-N-acetylenolpyruvoylglucosamine reductase from Agathobacter rectalis (strain ATCC 33656 / DSM 3377 / JCM 17463 / KCTC 5835 / VPI 0990) (Eubacterium rectale).